A 25-amino-acid polypeptide reads, in one-letter code: Aggression-stimulating peptide (25 aa).

In terms of tissue distribution, expressed by the skin glands of male frogs.

The protein localises to the secreted. Functionally, stimulates aggressive behavior in male frogs. No effect on female frogs. In Leptodactylus fallax (Mountain chicken frog), this protein is Aggression-stimulating peptide.